The following is a 470-amino-acid chain: Siroheme synthase (470 aa).

A precorrin-2 dehydrogenase /sirohydrochlorin ferrochelatase region spans residues 1-213 (MSDATDPGWF…GEHAAARQVL (213 aa)). NAD(+)-binding positions include 28-29 (GI) and 49-50 (PR). The interval 224–470 (GEVWLVGAGP…VVTPPPLSGT (247 aa)) is uroporphyrinogen-III C-methyltransferase. P233 is an S-adenosyl-L-methionine binding site. D256 (proton acceptor) is an active-site residue. K278 functions as the Proton donor in the catalytic mechanism. S-adenosyl-L-methionine-binding positions include 309-311 (GGD), I314, 339-340 (TA), M392, and G421.

In the N-terminal section; belongs to the precorrin-2 dehydrogenase / sirohydrochlorin ferrochelatase family. The protein in the C-terminal section; belongs to the precorrin methyltransferase family.

The catalysed reaction is uroporphyrinogen III + 2 S-adenosyl-L-methionine = precorrin-2 + 2 S-adenosyl-L-homocysteine + H(+). It catalyses the reaction precorrin-2 + NAD(+) = sirohydrochlorin + NADH + 2 H(+). The enzyme catalyses siroheme + 2 H(+) = sirohydrochlorin + Fe(2+). Its pathway is cofactor biosynthesis; adenosylcobalamin biosynthesis; precorrin-2 from uroporphyrinogen III: step 1/1. The protein operates within cofactor biosynthesis; adenosylcobalamin biosynthesis; sirohydrochlorin from precorrin-2: step 1/1. It functions in the pathway porphyrin-containing compound metabolism; siroheme biosynthesis; precorrin-2 from uroporphyrinogen III: step 1/1. It participates in porphyrin-containing compound metabolism; siroheme biosynthesis; siroheme from sirohydrochlorin: step 1/1. Its pathway is porphyrin-containing compound metabolism; siroheme biosynthesis; sirohydrochlorin from precorrin-2: step 1/1. Multifunctional enzyme that catalyzes the SAM-dependent methylations of uroporphyrinogen III at position C-2 and C-7 to form precorrin-2 via precorrin-1. Then it catalyzes the NAD-dependent ring dehydrogenation of precorrin-2 to yield sirohydrochlorin. Finally, it catalyzes the ferrochelation of sirohydrochlorin to yield siroheme. The chain is Siroheme synthase from Gluconacetobacter diazotrophicus (strain ATCC 49037 / DSM 5601 / CCUG 37298 / CIP 103539 / LMG 7603 / PAl5).